A 243-amino-acid polypeptide reads, in one-letter code: Probable transcriptional regulatory protein LCABL_11860 (243 aa).

The tract at residues Met1–Lys23 is disordered.

Belongs to the TACO1 family.

The protein localises to the cytoplasm. The sequence is that of Probable transcriptional regulatory protein LCABL_11860 from Lacticaseibacillus casei (strain BL23) (Lactobacillus casei).